The sequence spans 732 residues: Small conductance calcium-activated potassium channel protein 3 (732 aa).

A compositionally biased stretch (basic and acidic residues) spans 1-11 (MDTSGHFHDSG). Disordered regions lie at residues 1–82 (MDTS…QQAP) and 119–161 (AILH…QASP). Residues 35–61 (QPPPPPAPPAVPQQPPGPLLQPQPPQP) are compositionally biased toward pro residues. The span at 62 to 82 (QQQQSQQQQQQQSQQQQQQAP) shows a compositional bias: low complexity. Residues 119–133 (AILHPSSRQGSQLNL) are compositionally biased toward polar residues. The segment covering 139–148 (GHSPSSTATS) has biased composition (low complexity). Phosphoserine is present on Ser-168. The span at 241–257 (THNHQHAGTTAGSTTFP) shows a compositional bias: polar residues. Residues 241–260 (THNHQHAGTTAGSTTFPKAN) form a disordered region. A helical membrane pass occupies residues 289 to 309 (LIFGMFGIVVMVIETELSWGL). A helical transmembrane segment spans residues 316 to 336 (FSLALKCLISLSTVILLGLII). The helical transmembrane segment at 367–387 (ISLEMLVCAIHPIPGEYKFFW) threads the bilayer. Residues 406–426 (IILSIPMFLRLYLIARVMLLH) traverse the membrane as a helical segment. The helical transmembrane segment at 455 to 475 (LMTICPGTVLLVFSISLWIIA) threads the bilayer. The pore-forming intramembrane region spans 495–515 (FLGAMWLISITFLSIGYGDMV). A helical transmembrane segment spans residues 524 to 544 (VCLLTGIMGAGCTALVVAVVA). The interval 562-638 (DTQLTKRIKN…LVDLSKMQNV (77 aa)) is calmodulin-binding. Positions 643-670 (ITELNDRSEDLEKQIGSLESKLEHLTAS) form a coiled coil. The segment at 704-732 (GTSHAPPSDSPIGISSTSFPTPYTSSSSC) is disordered. The segment covering 718 to 732 (SSTSFPTPYTSSSSC) has biased composition (low complexity).

This sequence belongs to the potassium channel KCNN family. KCa2.3/KCNN3 subfamily. Homodimer. Heteromultimer with KCNN2 or KCNN1; this modulates plasma membrane expression and consequently the small conductance calcium-activated potassium channel activity. The complex is composed of 4 channel subunits each of which binds to a calmodulin subunit which regulates the channel activity through calcium-binding. Interacts with CALM1. As to expression, expressed at low levels in atrial and ventricular myocytes (at protein level).

The protein resides in the cell membrane. It localises to the cytoplasm. Its subcellular location is the myofibril. It is found in the sarcomere. The protein localises to the z line. The enzyme catalyses K(+)(in) = K(+)(out). Its activity is regulated as follows. Inhibited by bee venom neurotoxin apamin. Functionally, small conductance calcium-activated potassium channel that mediates the voltage-independent transmembrane transfer of potassium across the cell membrane through a constitutive interaction with calmodulin which binds the intracellular calcium allowing its opening. The current is characterized by a voltage-independent activation, an intracellular calcium concentration increase-dependent activation and a single-channel conductance of 10 picosiemens. Also presents an inwardly rectifying current, thus reducing its already small outward conductance of potassium ions, which is particularly the case when the membrane potential displays positive values, above + 20 mV. Activation is followed by membrane hyperpolarization. Thought to regulate neuronal excitability by contributing to the slow component of synaptic afterhyperpolarization. The protein is Small conductance calcium-activated potassium channel protein 3 of Mus musculus (Mouse).